Here is a 255-residue protein sequence, read N- to C-terminus: uncharacterized protein (255 aa).

It belongs to the methyltransferase superfamily.

This is an uncharacterized protein from Mycolicibacterium vanbaalenii (strain DSM 7251 / JCM 13017 / BCRC 16820 / KCTC 9966 / NRRL B-24157 / PYR-1) (Mycobacterium vanbaalenii).